A 323-amino-acid polypeptide reads, in one-letter code: Probable cell division protein WhiA (323 aa).

A DNA-binding region (H-T-H motif) is located at residues 279–313; it reads TLKELGEMVSGGKISKSGINHRLRKLDEIAERLRA.

It belongs to the WhiA family.

Involved in cell division and chromosome segregation. This is Probable cell division protein WhiA from Anoxybacillus flavithermus (strain DSM 21510 / WK1).